The primary structure comprises 85 residues: Large ribosomal subunit protein bL27 (85 aa).

A compositionally biased stretch (polar residues) spans 1-11; that stretch reads MASKASGGSTR. Residues 1 to 20 form a disordered region; the sequence is MASKASGGSTRNGRDSISKR.

The protein belongs to the bacterial ribosomal protein bL27 family.

The protein is Large ribosomal subunit protein bL27 of Sulfurihydrogenibium sp. (strain YO3AOP1).